Consider the following 354-residue polypeptide: Thiamine thiazole synthase 2, chloroplastic (354 aa).

The transit peptide at 1 to 44 (MATTAASSLLKSSFAGSRLPSATRTTTPSSVAVATPRAGGGPIR) directs the protein to the chloroplast. Residues 17-49 (SRLPSATRTTTPSSVAVATPRAGGGPIRASISS) form a disordered region. Positions 20–32 (PSATRTTTPSSVA) are enriched in polar residues. Residues Ala97, 117–118 (EQ), Gly125, and Val190 contribute to the substrate site. Residue Cys219 is modified to 2,3-didehydroalanine (Cys). Residues Asp221, His236, Met288, and 298–300 (RMG) contribute to the substrate site.

The protein belongs to the THI4 family. As to quaternary structure, homooctamer. The cofactor is Fe cation. During the catalytic reaction, a sulfide is transferred from Cys-219 to a reaction intermediate, generating a dehydroalanine residue. As to expression, highest expression in developing embryos and green leaves and a very low level expression seen in endosperm, roots, etiolated shoots and immature ears.

The protein localises to the plastid. Its subcellular location is the chloroplast. It catalyses the reaction [ADP-thiazole synthase]-L-cysteine + glycine + NAD(+) = [ADP-thiazole synthase]-dehydroalanine + ADP-5-ethyl-4-methylthiazole-2-carboxylate + nicotinamide + 3 H2O + 2 H(+). In terms of biological role, involved in biosynthesis of the thiamine precursor thiazole. Catalyzes the conversion of NAD and glycine to adenosine diphosphate 5-(2-hydroxyethyl)-4-methylthiazole-2-carboxylic acid (ADT), an adenylated thiazole intermediate. The reaction includes an iron-dependent sulfide transfer from a conserved cysteine residue of the protein to a thiazole intermediate. The enzyme can only undergo a single turnover, which suggests it is a suicide enzyme. May have additional roles in adaptation to various stress conditions and in DNA damage tolerance. The polypeptide is Thiamine thiazole synthase 2, chloroplastic (Zea mays (Maize)).